The primary structure comprises 701 residues: Polyribonucleotide nucleotidyltransferase (701 aa).

Residues aspartate 487 and aspartate 493 each coordinate Mg(2+). In terms of domain architecture, KH spans 553–612 (PRLYTLRINPDKIRDVIGKGGSVIRALTEETGTSIDIAEDGLITIASVSAEGAEEAKRRI). The 71-residue stretch at 622–692 (GKIYEGTVVK…ERGRIRLSIK (71 aa)) folds into the S1 motif domain.

Belongs to the polyribonucleotide nucleotidyltransferase family. Mg(2+) serves as cofactor.

It localises to the cytoplasm. The catalysed reaction is RNA(n+1) + phosphate = RNA(n) + a ribonucleoside 5'-diphosphate. In terms of biological role, involved in mRNA degradation. Catalyzes the phosphorolysis of single-stranded polyribonucleotides processively in the 3'- to 5'-direction. The sequence is that of Polyribonucleotide nucleotidyltransferase from Laribacter hongkongensis (strain HLHK9).